The chain runs to 676 residues: Cysteine-rich receptor-like protein kinase 4 (676 aa).

The first 16 residues, 1–16 (MSFFWLFPFLLHLSFA), serve as a signal peptide directing secretion. Residues 17-287 (DSLSPLSAPV…ISERGKGRNS (271 aa)) are Extracellular-facing. Gnk2-homologous domains follow at residues 31–135 (HLNH…HRNI) and 146–246 (ILLN…NYSF). N-linked (GlcNAc...) asparagine glycosylation is found at Asn-33, Asn-46, Asn-64, Asn-152, Asn-181, Asn-243, and Asn-248. The tract at residues 252–279 (TRSSSPPSLPPRSTPQQQLKLAPPPLIS) is disordered. A glycan (N-linked (GlcNAc...) asparagine) is linked at Asn-286. The helical transmembrane segment at 288-308 (SVIIVVVVPIIALLLLFVAFF) threads the bilayer. The Cytoplasmic portion of the chain corresponds to 309–676 (SLRAKKTRTN…DASITNVTPR (368 aa)). The 281-residue stretch at 351-631 (FCETNKLGQG…QMLTTSSIAL (281 aa)) folds into the Protein kinase domain. ATP contacts are provided by residues 357-365 (LGQGGFGEV) and Lys-379. Phosphotyrosine is present on Tyr-424. The active-site Proton acceptor is the Asp-476. A Phosphothreonine modification is found at Thr-516. Tyr-524 carries the post-translational modification Phosphotyrosine.

The protein belongs to the protein kinase superfamily. Ser/Thr protein kinase family. CRK subfamily.

The protein resides in the membrane. The catalysed reaction is L-seryl-[protein] + ATP = O-phospho-L-seryl-[protein] + ADP + H(+). The enzyme catalyses L-threonyl-[protein] + ATP = O-phospho-L-threonyl-[protein] + ADP + H(+). The protein is Cysteine-rich receptor-like protein kinase 4 (CRK4) of Arabidopsis thaliana (Mouse-ear cress).